Consider the following 884-residue polypeptide: Probable inorganic carbon transporter subunit DabA (884 aa).

Cys390, Asp392, His582, and Cys597 together coordinate Zn(2+).

It belongs to the inorganic carbon transporter (TC 9.A.2) DabA family. As to quaternary structure, forms a complex with DabB. Zn(2+) serves as cofactor.

It is found in the cell membrane. Part of an energy-coupled inorganic carbon pump. The protein is Probable inorganic carbon transporter subunit DabA of Staphylococcus saprophyticus subsp. saprophyticus (strain ATCC 15305 / DSM 20229 / NCIMB 8711 / NCTC 7292 / S-41).